Reading from the N-terminus, the 345-residue chain is D-erythrose-4-phosphate dehydrogenase (345 aa).

NAD(+) is bound at residue 11–12; that stretch reads RI. Substrate is bound by residues 158 to 160, Arg204, 217 to 218, and Arg240; these read SCT and TK. The Nucleophile role is filled by Cys159. Residue Asn322 participates in NAD(+) binding.

It belongs to the glyceraldehyde-3-phosphate dehydrogenase family. Epd subfamily. As to quaternary structure, homotetramer.

The protein localises to the cytoplasm. It catalyses the reaction D-erythrose 4-phosphate + NAD(+) + H2O = 4-phospho-D-erythronate + NADH + 2 H(+). It participates in cofactor biosynthesis; pyridoxine 5'-phosphate biosynthesis; pyridoxine 5'-phosphate from D-erythrose 4-phosphate: step 1/5. In terms of biological role, catalyzes the NAD-dependent conversion of D-erythrose 4-phosphate to 4-phosphoerythronate. The sequence is that of D-erythrose-4-phosphate dehydrogenase from Vibrio parahaemolyticus serotype O3:K6 (strain RIMD 2210633).